The sequence spans 456 residues: Histidine--tRNA ligase (456 aa).

The disordered stretch occupies residues 1-20; that stretch reads MTQSENVAAAGGAKTEPKVR.

Belongs to the class-II aminoacyl-tRNA synthetase family. In terms of assembly, homodimer.

The protein localises to the cytoplasm. The catalysed reaction is tRNA(His) + L-histidine + ATP = L-histidyl-tRNA(His) + AMP + diphosphate + H(+). This chain is Histidine--tRNA ligase, found in Cupriavidus necator (strain ATCC 17699 / DSM 428 / KCTC 22496 / NCIMB 10442 / H16 / Stanier 337) (Ralstonia eutropha).